Reading from the N-terminus, the 159-residue chain is Nucleoside diphosphate kinase (159 aa).

ATP is bound by residues K14, F62, R90, T96, and R107. H123 functions as the Pros-phosphohistidine intermediate in the catalytic mechanism.

Belongs to the NDK family. It depends on Mg(2+) as a cofactor.

Its subcellular location is the cytoplasm. It catalyses the reaction a 2'-deoxyribonucleoside 5'-diphosphate + ATP = a 2'-deoxyribonucleoside 5'-triphosphate + ADP. It carries out the reaction a ribonucleoside 5'-diphosphate + ATP = a ribonucleoside 5'-triphosphate + ADP. Major role in the synthesis of nucleoside triphosphates other than ATP. The ATP gamma phosphate is transferred to the NDP beta phosphate via a ping-pong mechanism, using a phosphorylated active-site intermediate. This Pyrococcus abyssi (strain GE5 / Orsay) protein is Nucleoside diphosphate kinase.